We begin with the raw amino-acid sequence, 368 residues long: tRNA(Met) cytidine acetate ligase (368 aa).

ATP contacts are provided by residues 7 to 20, glycine 96, asparagine 152, and arginine 175; that span reads IAEF…HKYL.

Belongs to the TmcAL family.

The protein localises to the cytoplasm. It catalyses the reaction cytidine(34) in elongator tRNA(Met) + acetate + ATP = N(4)-acetylcytidine(34) in elongator tRNA(Met) + AMP + diphosphate. Catalyzes the formation of N(4)-acetylcytidine (ac(4)C) at the wobble position of elongator tRNA(Met), using acetate and ATP as substrates. First activates an acetate ion to form acetyladenylate (Ac-AMP) and then transfers the acetyl group to tRNA to form ac(4)C34. The chain is tRNA(Met) cytidine acetate ligase from Streptococcus pyogenes serotype M3 (strain SSI-1).